Consider the following 239-residue polypeptide: DNA repair protein RecO (239 aa).

It belongs to the RecO family.

Involved in DNA repair and RecF pathway recombination. This Tolumonas auensis (strain DSM 9187 / NBRC 110442 / TA 4) protein is DNA repair protein RecO.